We begin with the raw amino-acid sequence, 98 residues long: MSLTYFNVMLAFTMSFLGLLMYRSHLMSSLLCLEGLMLSLFVLVTITILITHSTLNSMLPIILLVFAACEAALGLSLLVAVSNTYGLDHVQNLNLLKC.

A run of 3 helical transmembrane segments spans residues 1–21 (MSLT…GLLM), 30–50 (LLCL…TILI), and 61–81 (IILL…LVAV).

Belongs to the complex I subunit 4L family. In terms of assembly, core subunit of respiratory chain NADH dehydrogenase (Complex I) which is composed of 45 different subunits.

It is found in the mitochondrion inner membrane. It catalyses the reaction a ubiquinone + NADH + 5 H(+)(in) = a ubiquinol + NAD(+) + 4 H(+)(out). In terms of biological role, core subunit of the mitochondrial membrane respiratory chain NADH dehydrogenase (Complex I) which catalyzes electron transfer from NADH through the respiratory chain, using ubiquinone as an electron acceptor. Part of the enzyme membrane arm which is embedded in the lipid bilayer and involved in proton translocation. The sequence is that of NADH-ubiquinone oxidoreductase chain 4L (MT-ND4L) from Pipistrellus abramus (Japanese pipistrelle).